Here is a 449-residue protein sequence, read N- to C-terminus: Adenylosuccinate synthetase (449 aa).

Residues 12 to 18 (GDEGKGK) and 40 to 42 (GHT) each bind GTP. The active-site Proton acceptor is aspartate 13. Residues aspartate 13 and glycine 40 each coordinate Mg(2+). Residues 13 to 16 (DEGK), 38 to 41 (NAGH), threonine 128, arginine 142, glutamine 223, threonine 238, and arginine 302 contribute to the IMP site. The active-site Proton donor is the histidine 41. A substrate-binding site is contributed by 298–304 (TTTGRRR). Residues arginine 304, 330–332 (KLD), and 412–414 (SLG) contribute to the GTP site.

This sequence belongs to the adenylosuccinate synthetase family. As to quaternary structure, homodimer. The cofactor is Mg(2+).

The protein resides in the cytoplasm. It catalyses the reaction IMP + L-aspartate + GTP = N(6)-(1,2-dicarboxyethyl)-AMP + GDP + phosphate + 2 H(+). The protein operates within purine metabolism; AMP biosynthesis via de novo pathway; AMP from IMP: step 1/2. Functionally, plays an important role in the de novo pathway of purine nucleotide biosynthesis. Catalyzes the first committed step in the biosynthesis of AMP from IMP. The sequence is that of Adenylosuccinate synthetase from Gloeothece citriformis (strain PCC 7424) (Cyanothece sp. (strain PCC 7424)).